Reading from the N-terminus, the 138-residue chain is Larval cuticle protein 1 (138 aa).

Residues 1–16 (MFKFVMVFAVLGVAAA) form the signal peptide. One can recognise a Chitin-binding type R&amp;R domain in the interval 49–110 (ADGFDADLLV…PVGAVLPTPP (62 aa)).

In terms of biological role, component of the larval cuticle. The protein is Larval cuticle protein 1 (Lcp1) of Drosophila miranda (Fruit fly).